Consider the following 658-residue polypeptide: Carnitine O-palmitoyltransferase 2, mitochondrial (658 aa).

The transit peptide at 1–26 (MARLLTSSSALRWGAVSSSQSVGRAY) directs the protein to the mitochondrion. Residues 27-179 (SSGSPDTEYV…GYLEPEIFHL (153 aa)) are Mitochondrial matrix-facing. Residues 180 to 209 (NPAKSDTLTFRKLIRFVPSSLSWYGAYMVN) constitute an intramembrane region (note=Mitochondrial inner membrane). Residues 210–658 (AYPLDMSQYF…FTVLQDKPIK (449 aa)) lie on the Mitochondrial matrix side of the membrane. The active-site Proton acceptor is His-373. CoA is bound at residue 453–465 (GKELLKTQKLSPD). 3 residues coordinate (R)-carnitine: Tyr-487, Ser-489, and Thr-500.

This sequence belongs to the carnitine/choline acetyltransferase family.

Its subcellular location is the mitochondrion inner membrane. The catalysed reaction is (R)-carnitine + hexadecanoyl-CoA = O-hexadecanoyl-(R)-carnitine + CoA. It catalyses the reaction octanoyl-CoA + (R)-carnitine = O-octanoyl-(R)-carnitine + CoA. The enzyme catalyses decanoyl-CoA + (R)-carnitine = O-decanoyl-(R)-carnitine + CoA. It carries out the reaction dodecanoyl-CoA + (R)-carnitine = O-dodecanoyl-R-carnitine + CoA. The catalysed reaction is tetradecanoyl-CoA + (R)-carnitine = O-tetradecanoyl-(R)-carnitine + CoA. It catalyses the reaction (R)-carnitine + octadecanoyl-CoA = O-octadecanoyl-(R)-carnitine + CoA. The enzyme catalyses eicosanoyl-CoA + (R)-carnitine = O-eicosanoyl-(R)-carnitine + CoA. It carries out the reaction (9Z)-tetradecenoyl-CoA + (R)-carnitine = O-(9Z)-tetradecenoyl-(R)-carnitine + CoA. The catalysed reaction is (5Z)-tetradecenoyl-CoA + (R)-carnitine = O-(5Z)-tetradecenoyl-(R)-carnitine + CoA. It catalyses the reaction (R)-carnitine + (9Z)-octadecenoyl-CoA = O-(9Z)-octadecenoyl-(R)-carnitine + CoA. The enzyme catalyses 4,8-dimethylnonanoyl-CoA + (R)-carnitine = O-4,8-dimethylnonanoyl-(R)-carnitine + CoA. It functions in the pathway lipid metabolism; fatty acid beta-oxidation. Its function is as follows. Involved in the intramitochondrial synthesis of acylcarnitines from accumulated acyl-CoA metabolites. Reconverts acylcarnitines back into the respective acyl-CoA esters that can then undergo beta-oxidation, an essential step for the mitochondrial uptake of long-chain fatty acids and their subsequent beta-oxidation in the mitochondrion. Active with medium (C8-C12) and long-chain (C14-C18) acyl-CoA esters. The polypeptide is Carnitine O-palmitoyltransferase 2, mitochondrial (cpt2) (Xenopus tropicalis (Western clawed frog)).